Consider the following 148-residue polypeptide: Large ribosomal subunit protein uL15B (148 aa).

Composition is skewed to basic residues over residues M1–G13 and R21–G31. The interval M1–L38 is disordered. Y108 carries the phosphotyrosine modification.

The protein belongs to the universal ribosomal protein uL15 family. In terms of assembly, component of the large ribosomal subunit (LSU). Mature yeast ribosomes consist of a small (40S) and a large (60S) subunit. The 40S small subunit contains 1 molecule of ribosomal RNA (18S rRNA) and at least 33 different proteins. The large 60S subunit contains 3 rRNA molecules (25S, 5.8S and 5S rRNA) and at least 46 different proteins.

The protein localises to the cytoplasm. The protein resides in the nucleus. It is found in the nucleolus. Component of the ribosome, a large ribonucleoprotein complex responsible for the synthesis of proteins in the cell. The small ribosomal subunit (SSU) binds messenger RNAs (mRNAs) and translates the encoded message by selecting cognate aminoacyl-transfer RNA (tRNA) molecules. The large subunit (LSU) contains the ribosomal catalytic site termed the peptidyl transferase center (PTC), which catalyzes the formation of peptide bonds, thereby polymerizing the amino acids delivered by tRNAs into a polypeptide chain. The nascent polypeptides leave the ribosome through a tunnel in the LSU and interact with protein factors that function in enzymatic processing, targeting, and the membrane insertion of nascent chains at the exit of the ribosomal tunnel. This chain is Large ribosomal subunit protein uL15B (rpl2801), found in Schizosaccharomyces pombe (strain 972 / ATCC 24843) (Fission yeast).